The following is a 56-amino-acid chain: Small ribosomal subunit protein uS14 (56 aa).

Residues C21, C24, C39, and C42 each coordinate Zn(2+).

It belongs to the universal ribosomal protein uS14 family. It depends on Zn(2+) as a cofactor.

This Debaryomyces hansenii (strain ATCC 36239 / CBS 767 / BCRC 21394 / JCM 1990 / NBRC 0083 / IGC 2968) (Yeast) protein is Small ribosomal subunit protein uS14 (RPS29).